Consider the following 209-residue polypeptide: Translation initiation factor IF-3 (209 aa).

It belongs to the IF-3 family. As to quaternary structure, monomer.

Its subcellular location is the cytoplasm. In terms of biological role, IF-3 binds to the 30S ribosomal subunit and shifts the equilibrium between 70S ribosomes and their 50S and 30S subunits in favor of the free subunits, thus enhancing the availability of 30S subunits on which protein synthesis initiation begins. This chain is Translation initiation factor IF-3, found in Chlorobium phaeovibrioides (strain DSM 265 / 1930) (Prosthecochloris vibrioformis (strain DSM 265)).